The following is a 336-amino-acid chain: Fructose-1,6-bisphosphatase class 1 (336 aa).

Glutamate 90, aspartate 112, leucine 114, and aspartate 115 together coordinate Mg(2+). Substrate contacts are provided by residues 115–118 (DGSS), asparagine 211, and lysine 277. Glutamate 283 is a Mg(2+) binding site.

It belongs to the FBPase class 1 family. Homotetramer. Mg(2+) serves as cofactor.

The protein resides in the cytoplasm. It carries out the reaction beta-D-fructose 1,6-bisphosphate + H2O = beta-D-fructose 6-phosphate + phosphate. It participates in carbohydrate biosynthesis; gluconeogenesis. This is Fructose-1,6-bisphosphatase class 1 from Pseudomonas putida (strain GB-1).